We begin with the raw amino-acid sequence, 307 residues long: Homoserine O-acetyltransferase (307 aa).

C142 (acyl-thioester intermediate) is an active-site residue. Substrate-binding residues include K163 and S192. Catalysis depends on H235, which acts as the Proton acceptor. E237 is an active-site residue. R249 provides a ligand contact to substrate.

This sequence belongs to the MetA family.

It is found in the cytoplasm. It carries out the reaction L-homoserine + acetyl-CoA = O-acetyl-L-homoserine + CoA. It participates in amino-acid biosynthesis; L-methionine biosynthesis via de novo pathway; O-acetyl-L-homoserine from L-homoserine: step 1/1. In terms of biological role, transfers an acetyl group from acetyl-CoA to L-homoserine, forming acetyl-L-homoserine. The chain is Homoserine O-acetyltransferase from Desulfitobacterium hafniense (strain Y51).